A 249-amino-acid chain; its full sequence is NADH-quinone oxidoreductase subunit C (249 aa).

A disordered region spans residues M1 to S29.

Belongs to the complex I 30 kDa subunit family. In terms of assembly, NDH-1 is composed of 14 different subunits. Subunits NuoB, C, D, E, F, and G constitute the peripheral sector of the complex.

The protein localises to the cell membrane. The catalysed reaction is a quinone + NADH + 5 H(+)(in) = a quinol + NAD(+) + 4 H(+)(out). In terms of biological role, NDH-1 shuttles electrons from NADH, via FMN and iron-sulfur (Fe-S) centers, to quinones in the respiratory chain. The immediate electron acceptor for the enzyme in this species is believed to be a menaquinone. Couples the redox reaction to proton translocation (for every two electrons transferred, four hydrogen ions are translocated across the cytoplasmic membrane), and thus conserves the redox energy in a proton gradient. The sequence is that of NADH-quinone oxidoreductase subunit C from Saccharopolyspora erythraea (strain ATCC 11635 / DSM 40517 / JCM 4748 / NBRC 13426 / NCIMB 8594 / NRRL 2338).